The following is a 147-amino-acid chain: Prefoldin subunit alpha (147 aa).

This sequence belongs to the prefoldin alpha subunit family. As to quaternary structure, heterohexamer of two alpha and four beta subunits.

It is found in the cytoplasm. Functionally, molecular chaperone capable of stabilizing a range of proteins. Seems to fulfill an ATP-independent, HSP70-like function in archaeal de novo protein folding. The protein is Prefoldin subunit alpha of Saccharolobus islandicus (strain M.16.27) (Sulfolobus islandicus).